The following is a 501-amino-acid chain: Glycerol kinase (501 aa).

Threonine 17 provides a ligand contact to ADP. 3 residues coordinate ATP: threonine 17, threonine 18, and serine 19. Threonine 17 lines the sn-glycerol 3-phosphate pocket. An ADP-binding site is contributed by arginine 21. Arginine 87, glutamate 88, tyrosine 139, and aspartate 243 together coordinate sn-glycerol 3-phosphate. Glycerol contacts are provided by arginine 87, glutamate 88, tyrosine 139, aspartate 243, and glutamine 244. The ADP site is built by threonine 265 and glycine 308. 4 residues coordinate ATP: threonine 265, glycine 308, glutamine 312, and glycine 409. Residues glycine 409 and asparagine 413 each contribute to the ADP site.

The protein belongs to the FGGY kinase family.

It catalyses the reaction glycerol + ATP = sn-glycerol 3-phosphate + ADP + H(+). It participates in polyol metabolism; glycerol degradation via glycerol kinase pathway; sn-glycerol 3-phosphate from glycerol: step 1/1. Inhibited by fructose 1,6-bisphosphate (FBP). Key enzyme in the regulation of glycerol uptake and metabolism. Catalyzes the phosphorylation of glycerol to yield sn-glycerol 3-phosphate. The sequence is that of Glycerol kinase from Pseudomonas syringae pv. syringae (strain B728a).